The following is an 84-amino-acid chain: Antimicrobial peptide MeuNaTxbeta-2 (84 aa).

The first 20 residues, 1–20 (MMKTVIVLIVFSLVMIVVKS), serve as a signal peptide directing secretion. Residues 21-83 (DNGYLLDKYT…LWHYETNRCR (63 aa)) enclose the LCN-type CS-alpha/beta domain. 4 disulfides stabilise this stretch: cysteine 32-cysteine 82, cysteine 36-cysteine 57, cysteine 43-cysteine 64, and cysteine 47-cysteine 66.

As to expression, expressed by the venom gland.

It is found in the secreted. Its function is as follows. Antimicrobial peptide with activity against both Gram-positive and -negative bacteria. In Mesobuthus eupeus (Lesser Asian scorpion), this protein is Antimicrobial peptide MeuNaTxbeta-2.